A 340-amino-acid polypeptide reads, in one-letter code: DNA-directed RNA polymerase subunit alpha (340 aa).

The interval 1–237 (MSSDELVYMN…EQMNPFINFD (237 aa)) is alpha N-terminal domain (alpha-NTD). The alpha C-terminal domain (alpha-CTD) stretch occupies residues 256 to 340 (FNENLYRSVD…PEEDQIKEGE (85 aa)).

This sequence belongs to the RNA polymerase alpha chain family. In terms of assembly, homodimer. The RNAP catalytic core consists of 2 alpha, 1 beta, 1 beta' and 1 omega subunit. When a sigma factor is associated with the core the holoenzyme is formed, which can initiate transcription.

It catalyses the reaction RNA(n) + a ribonucleoside 5'-triphosphate = RNA(n+1) + diphosphate. Functionally, DNA-dependent RNA polymerase catalyzes the transcription of DNA into RNA using the four ribonucleoside triphosphates as substrates. This Desulforapulum autotrophicum (strain ATCC 43914 / DSM 3382 / VKM B-1955 / HRM2) (Desulfobacterium autotrophicum) protein is DNA-directed RNA polymerase subunit alpha.